Here is a 440-residue protein sequence, read N- to C-terminus: Transposon Ty1-A Gag polyprotein (440 aa).

4 stretches are compositionally biased toward polar residues: residues 1-23 (MESQ…SVTS), 48-60 (TKAN…TPAS), 71-93 (SPQT…MMTQ), and 127-152 (QSQF…GNTF). Disordered regions lie at residues 1-93 (MESQ…MMTQ), 126-173 (PQSQ…RPPP), and 352-440 (GSRN…PETY). The span at 153–165 (TDSSSADSDMTST) shows a compositional bias: low complexity. The interval 299-401 (NNGIHINNKV…NSKSKTARAH (103 aa)) is RNA-binding. Residues 402-418 (NVSTSNNSPSTDNDSIS) are compositionally biased toward low complexity. Serine 416 carries the post-translational modification Phosphoserine. Over residues 419–428 (KSTTEPIQLN) the composition is skewed to polar residues. A compositionally biased stretch (basic and acidic residues) spans 429-440 (NKHDLHLRPETY).

In terms of assembly, homotrimer.

Its subcellular location is the cytoplasm. Capsid protein (CA) is the structural component of the virus-like particle (VLP), forming the shell that encapsulates the retrotransposons dimeric RNA genome. The particles are assembled from trimer-clustered units and there are holes in the capsid shells that allow for the diffusion of macromolecules. CA also has nucleocapsid-like chaperone activity, promoting primer tRNA(i)-Met annealing to the multipartite primer-binding site (PBS), dimerization of Ty1 RNA and initiation of reverse transcription. This Saccharomyces cerevisiae (strain ATCC 204508 / S288c) (Baker's yeast) protein is Transposon Ty1-A Gag polyprotein (TY1A-A).